Consider the following 150-residue polypeptide: Macrodomain Ter protein (150 aa).

It belongs to the MatP family. Homodimer.

It is found in the cytoplasm. In terms of biological role, required for spatial organization of the terminus region of the chromosome (Ter macrodomain) during the cell cycle. Prevents early segregation of duplicated Ter macrodomains during cell division. Binds specifically to matS, which is a 13 bp signature motif repeated within the Ter macrodomain. This is Macrodomain Ter protein from Escherichia coli O81 (strain ED1a).